The primary structure comprises 207 residues: A-type ATP synthase subunit E (207 aa).

This sequence belongs to the V-ATPase E subunit family. In terms of assembly, has multiple subunits with at least A(3), B(3), C, D, E, F, H, I and proteolipid K(x).

It localises to the cell membrane. Functionally, component of the A-type ATP synthase that produces ATP from ADP in the presence of a proton gradient across the membrane. This chain is A-type ATP synthase subunit E, found in Hyperthermus butylicus (strain DSM 5456 / JCM 9403 / PLM1-5).